Here is a 266-residue protein sequence, read N- to C-terminus: 4-hydroxy-tetrahydrodipicolinate reductase (266 aa).

Residues glycine 7 to methionine 12, glutamate 33, glycine 96 to threonine 98, and alanine 120 to methionine 123 each bind NAD(+). Histidine 153 functions as the Proton donor/acceptor in the catalytic mechanism. Histidine 154 contributes to the (S)-2,3,4,5-tetrahydrodipicolinate binding site. Lysine 157 functions as the Proton donor in the catalytic mechanism. Glycine 163–threonine 164 contacts (S)-2,3,4,5-tetrahydrodipicolinate.

Belongs to the DapB family.

The protein localises to the cytoplasm. It catalyses the reaction (S)-2,3,4,5-tetrahydrodipicolinate + NAD(+) + H2O = (2S,4S)-4-hydroxy-2,3,4,5-tetrahydrodipicolinate + NADH + H(+). The catalysed reaction is (S)-2,3,4,5-tetrahydrodipicolinate + NADP(+) + H2O = (2S,4S)-4-hydroxy-2,3,4,5-tetrahydrodipicolinate + NADPH + H(+). Its pathway is amino-acid biosynthesis; L-lysine biosynthesis via DAP pathway; (S)-tetrahydrodipicolinate from L-aspartate: step 4/4. Functionally, catalyzes the conversion of 4-hydroxy-tetrahydrodipicolinate (HTPA) to tetrahydrodipicolinate. The protein is 4-hydroxy-tetrahydrodipicolinate reductase of Polynucleobacter necessarius subsp. necessarius (strain STIR1).